The primary structure comprises 566 residues: 2-isopropylmalate synthase (566 aa).

The Pyruvate carboxyltransferase domain maps to 32–306 (PLWCAVDLRD…DPQIDFSNID (275 aa)). Aspartate 41, histidine 245, histidine 247, and asparagine 281 together coordinate Mg(2+). The interval 451–566 (PVRPLERIKQ…VVSAINRASR (116 aa)) is regulatory domain.

The protein belongs to the alpha-IPM synthase/homocitrate synthase family. LeuA type 2 subfamily. As to quaternary structure, homodimer. Mg(2+) serves as cofactor.

It is found in the cytoplasm. The enzyme catalyses 3-methyl-2-oxobutanoate + acetyl-CoA + H2O = (2S)-2-isopropylmalate + CoA + H(+). Its pathway is amino-acid biosynthesis; L-leucine biosynthesis; L-leucine from 3-methyl-2-oxobutanoate: step 1/4. In terms of biological role, catalyzes the condensation of the acetyl group of acetyl-CoA with 3-methyl-2-oxobutanoate (2-ketoisovalerate) to form 3-carboxy-3-hydroxy-4-methylpentanoate (2-isopropylmalate). The sequence is that of 2-isopropylmalate synthase from Mycobacterium ulcerans (strain Agy99).